The primary structure comprises 141 residues: Large ribosomal subunit protein uL11 (141 aa).

It belongs to the universal ribosomal protein uL11 family. As to quaternary structure, part of the ribosomal stalk of the 50S ribosomal subunit. Interacts with L10 and the large rRNA to form the base of the stalk. L10 forms an elongated spine to which L12 dimers bind in a sequential fashion forming a multimeric L10(L12)X complex. Post-translationally, one or more lysine residues are methylated.

Functionally, forms part of the ribosomal stalk which helps the ribosome interact with GTP-bound translation factors. This is Large ribosomal subunit protein uL11 from Clostridium perfringens (strain ATCC 13124 / DSM 756 / JCM 1290 / NCIMB 6125 / NCTC 8237 / Type A).